Reading from the N-terminus, the 322-residue chain is tRNA-specific adenosine deaminase subunit TAD3 (322 aa).

Residues 162 to 283 (EVRNELSRAS…EMQRTGSLKL (122 aa)) form the CMP/dCMP-type deaminase domain. Zn(2+) is bound by residues H216, C254, C257, and C322.

This sequence belongs to the cytidine and deoxycytidylate deaminase family. ADAT3 subfamily. Heterodimer with TAD2.

Its subcellular location is the cytoplasm. The protein localises to the nucleus. The protein resides in the peroxisome. In terms of biological role, structural subunit of tRNA-specific adenosine deaminase, which deaminates adenosine-34 (the first, also called wobble position of the anticodon) to inosine in many tRNAs. Inosine-34 allows the decoding of 3 different nucleotides at the third position of mRNA codons, as inosine is able to pair with U, C, and A. The sequence is that of tRNA-specific adenosine deaminase subunit TAD3 (TAD3) from Saccharomyces cerevisiae (strain ATCC 204508 / S288c) (Baker's yeast).